The sequence spans 609 residues: Proline--tRNA ligase (609 aa).

Belongs to the class-II aminoacyl-tRNA synthetase family. ProS type 1 subfamily. In terms of assembly, homodimer.

It localises to the cytoplasm. It catalyses the reaction tRNA(Pro) + L-proline + ATP = L-prolyl-tRNA(Pro) + AMP + diphosphate. In terms of biological role, catalyzes the attachment of proline to tRNA(Pro) in a two-step reaction: proline is first activated by ATP to form Pro-AMP and then transferred to the acceptor end of tRNA(Pro). As ProRS can inadvertently accommodate and process non-cognate amino acids such as alanine and cysteine, to avoid such errors it has two additional distinct editing activities against alanine. One activity is designated as 'pretransfer' editing and involves the tRNA(Pro)-independent hydrolysis of activated Ala-AMP. The other activity is designated 'posttransfer' editing and involves deacylation of mischarged Ala-tRNA(Pro). The misacylated Cys-tRNA(Pro) is not edited by ProRS. This chain is Proline--tRNA ligase, found in Synechococcus sp. (strain JA-2-3B'a(2-13)) (Cyanobacteria bacterium Yellowstone B-Prime).